We begin with the raw amino-acid sequence, 363 residues long: Carbamoyl phosphate synthase small chain (363 aa).

2 CPSase regions span residues 1–168 (MTKR…ASPG) and 1–172 (MTKR…DGKR). L-glutamine is bound by residues S46, G220, and G222. In terms of domain architecture, Glutamine amidotransferase type-1 spans 172–359 (RVVLVDYGVK…MEMMNVKEEG (188 aa)). C247 serves as the catalytic Nucleophile. 5 residues coordinate L-glutamine: L248, Q251, N289, G291, and Y292. Catalysis depends on residues H332 and E334.

Belongs to the CarA family. As to quaternary structure, composed of two chains; the small (or glutamine) chain promotes the hydrolysis of glutamine to ammonia, which is used by the large (or ammonia) chain to synthesize carbamoyl phosphate. Tetramer of heterodimers (alpha,beta)4.

It carries out the reaction hydrogencarbonate + L-glutamine + 2 ATP + H2O = carbamoyl phosphate + L-glutamate + 2 ADP + phosphate + 2 H(+). The enzyme catalyses L-glutamine + H2O = L-glutamate + NH4(+). It participates in amino-acid biosynthesis; L-arginine biosynthesis; carbamoyl phosphate from bicarbonate: step 1/1. It functions in the pathway pyrimidine metabolism; UMP biosynthesis via de novo pathway; (S)-dihydroorotate from bicarbonate: step 1/3. Functionally, small subunit of the glutamine-dependent carbamoyl phosphate synthetase (CPSase). CPSase catalyzes the formation of carbamoyl phosphate from the ammonia moiety of glutamine, carbonate, and phosphate donated by ATP, constituting the first step of 2 biosynthetic pathways, one leading to arginine and/or urea and the other to pyrimidine nucleotides. The small subunit (glutamine amidotransferase) binds and cleaves glutamine to supply the large subunit with the substrate ammonia. The chain is Carbamoyl phosphate synthase small chain from Listeria innocua serovar 6a (strain ATCC BAA-680 / CLIP 11262).